Here is a 187-residue protein sequence, read N- to C-terminus: MASTADFKNGLVLKVDGKLQQIVEFQHVKPGKGPAFVRTKLKDVVTGKTVDKTWNAGVKVETATVDRRDMTYLYNDGSSYILMDDKTFEQFELPLDAFGDAGRFLLENMRVQVSFHDGEALFGELPVSVDLRVEHTDPGLQGDRSTGGTKPATLETGAEIQVPLFIETGNVLKVDTRDGSYLSRVNN.

It belongs to the elongation factor P family.

The protein resides in the cytoplasm. It participates in protein biosynthesis; polypeptide chain elongation. Functionally, involved in peptide bond synthesis. Stimulates efficient translation and peptide-bond synthesis on native or reconstituted 70S ribosomes in vitro. Probably functions indirectly by altering the affinity of the ribosome for aminoacyl-tRNA, thus increasing their reactivity as acceptors for peptidyl transferase. The protein is Elongation factor P of Corynebacterium efficiens (strain DSM 44549 / YS-314 / AJ 12310 / JCM 11189 / NBRC 100395).